We begin with the raw amino-acid sequence, 86 residues long: Small ribosomal subunit protein bS20 (86 aa).

This sequence belongs to the bacterial ribosomal protein bS20 family.

Functionally, binds directly to 16S ribosomal RNA. This chain is Small ribosomal subunit protein bS20, found in Buchnera aphidicola subsp. Cinara cedri (strain Cc).